Here is a 251-residue protein sequence, read N- to C-terminus: CDP-diacylglycerol pyrophosphatase (251 aa).

The chain crosses the membrane as a helical span at residues 4–24; the sequence is AGLLFLVMIVIAVVAAGIGYW.

It belongs to the Cdh family.

The protein resides in the cell inner membrane. The catalysed reaction is a CDP-1,2-diacyl-sn-glycerol + H2O = a 1,2-diacyl-sn-glycero-3-phosphate + CMP + 2 H(+). It functions in the pathway phospholipid metabolism; CDP-diacylglycerol degradation; phosphatidate from CDP-diacylglycerol: step 1/1. The protein is CDP-diacylglycerol pyrophosphatase of Escherichia coli O127:H6 (strain E2348/69 / EPEC).